Consider the following 202-residue polypeptide: uncharacterized protein (202 aa).

The 81-residue stretch at 116–196 folds into the Smr domain; sequence LDLHGMTCSE…GKGTTWVLLK (81 aa).

This is an uncharacterized protein from Treponema pallidum (strain Nichols).